We begin with the raw amino-acid sequence, 499 residues long: Putative sodium-dependent excitatory amino acid transporter glt-4 (499 aa).

Topologically, residues Met-1–Glu-7 are cytoplasmic. Transmembrane regions (helical) follow at residues Asn-8–Leu-28, Phe-50–Leu-70, and Ile-87–Ile-107. Asn-165 carries an N-linked (GlcNAc...) asparagine glycan. The next 3 helical transmembrane spans lie at Val-194–Ile-217, Phe-227–Ile-254, and Ile-276–Leu-297. The discontinuously helical intramembrane region spans Ile-303–Cys-333. Residue Ser-320–Ser-322 coordinates L-aspartate. A helical membrane pass occupies residues Val-343–Tyr-369. Na(+) is bound by residues Gly-351, Thr-353, and Asn-355. Residues Thr-359, Ile-400 to Gly-404, Asp-433, and Asn-440 each bind L-aspartate. Positions Val-383–Gly-416 form an intramembrane region, discontinuously helical. Residues Phe-430–Ile-451 traverse the membrane as a helical segment. 2 residues coordinate Na(+): Asn-440 and Asp-444.

It belongs to the dicarboxylate/amino acid:cation symporter (DAACS) (TC 2.A.23) family.

It is found in the cell membrane. Functionally, sodium-dependent, high-affinity amino acid transporter that mediates the uptake of L-glutamate and also L-aspartate and D-aspartate. Functions as a symporter that transports one amino acid molecule together with two or three Na(+) ions and one proton, in parallel with the counter-transport of one K(+) ion. Mediates Cl(-) flux that is not coupled to amino acid transport; this avoids the accumulation of negative charges due to aspartate and Na(+) symport. The chain is Putative sodium-dependent excitatory amino acid transporter glt-4 (glt-4) from Caenorhabditis elegans.